Consider the following 619-residue polypeptide: Magnesium-chelatase 67 kDa subunit (619 aa).

An ATP-binding site is contributed by 33 to 40 (STVGSGKS). A disordered region spans residues 273-321 (TRMPEREPSEEEMQQEEPPPPEEQPEQEGEDENAPPDETDSDADEEQEE). Residues 280-321 (PSEEEMQQEEPPPPEEQPEQEGEDENAPPDETDSDADEEQEE) are compositionally biased toward acidic residues. In terms of domain architecture, VWFA spans 431 to 619 (LFIFMVDASG…AEQIVEAALS (189 aa)).

Belongs to the Mg-chelatase subunits D/I family.

The enzyme catalyses protoporphyrin IX + Mg(2+) + ATP + H2O = Mg-protoporphyrin IX + ADP + phosphate + 3 H(+). Its pathway is porphyrin-containing compound metabolism; bacteriochlorophyll biosynthesis. Its function is as follows. Involved in bacteriochlorophyll biosynthesis; introduces a magnesium ion into protoporphyrin IX to yield Mg-protoporphyrin IX. This chain is Magnesium-chelatase 67 kDa subunit (bchD), found in Chlorobaculum parvum (strain DSM 263 / NCIMB 8327) (Chlorobium vibrioforme subsp. thiosulfatophilum).